Here is a 379-residue protein sequence, read N- to C-terminus: Alkanesulfonate monooxygenase (379 aa).

Belongs to the SsuD family.

It carries out the reaction an alkanesulfonate + FMNH2 + O2 = an aldehyde + FMN + sulfite + H2O + 2 H(+). In terms of biological role, catalyzes the desulfonation of aliphatic sulfonates. In Pseudomonas syringae pv. syringae (strain B728a), this protein is Alkanesulfonate monooxygenase.